Reading from the N-terminus, the 143-residue chain is Nucleoside diphosphate kinase (143 aa).

Residues Lys11, Phe59, Arg87, Thr93, Arg104, and Asn114 each contribute to the ATP site. His117 (pros-phosphohistidine intermediate) is an active-site residue.

The protein belongs to the NDK family. In terms of assembly, homotetramer. Mg(2+) is required as a cofactor.

It localises to the cytoplasm. It carries out the reaction a 2'-deoxyribonucleoside 5'-diphosphate + ATP = a 2'-deoxyribonucleoside 5'-triphosphate + ADP. The catalysed reaction is a ribonucleoside 5'-diphosphate + ATP = a ribonucleoside 5'-triphosphate + ADP. Major role in the synthesis of nucleoside triphosphates other than ATP. The ATP gamma phosphate is transferred to the NDP beta phosphate via a ping-pong mechanism, using a phosphorylated active-site intermediate. This is Nucleoside diphosphate kinase from Shewanella woodyi (strain ATCC 51908 / MS32).